Consider the following 321-residue polypeptide: RNA/RNP complex-1-interacting phosphatase (321 aa).

Basic residues predominate over residues 1–11; the sequence is MNQHYGRHGRG. The segment at 1–27 is disordered; that stretch reads MNQHYGRHGRGRGRDFAACAPPKKKGR. Residues 60–207 form the Tyrosine-protein phosphatase domain; the sequence is FEAKLMPEEC…LQKRHVRKNR (148 aa). Cys-151 (phosphocysteine intermediate) is an active-site residue. 152–157 is a substrate binding site; the sequence is THGLNR. The active-site Proton donor/acceptor is Arg-157. The segment at 205–262 is disordered; it reads KNRNVSAPRTDGLEDSADPTEQVYTNNKPVKKKPRKNRRGGHLAPSQHFQHQTQSSPY. Over residues 233–245 the composition is skewed to basic residues; it reads PVKKKPRKNRRGG. The segment covering 251–262 has biased composition (polar residues); sequence QHFQHQTQSSPY.

Belongs to the protein-tyrosine phosphatase family. Non-receptor class dual specificity subfamily. In terms of assembly, monomer. May interact with SFRS7 and SFRS9/SRP30C.

It localises to the nucleus. The protein localises to the nucleus speckle. Functionally, possesses RNA 5'-triphosphatase and diphosphatase activities, but displays a poor protein-tyrosine phosphatase activity. In addition, has phosphatase activity with ATP, ADP and O-methylfluorescein phosphate (in vitro). Binds to RNA. May participate in nuclear mRNA metabolism. This is RNA/RNP complex-1-interacting phosphatase (Dusp11) from Mus musculus (Mouse).